We begin with the raw amino-acid sequence, 106 residues long: Large ribosomal subunit protein eL42 (106 aa).

Residues F36–P56 are disordered.

Belongs to the eukaryotic ribosomal protein eL42 family.

The polypeptide is Large ribosomal subunit protein eL42 (RPL44) (Coprinopsis cinerea (strain Okayama-7 / 130 / ATCC MYA-4618 / FGSC 9003) (Inky cap fungus)).